The following is a 376-amino-acid chain: Succinyl-diaminopimelate desuccinylase (376 aa).

His-67 contributes to the Zn(2+) binding site. The active site involves Asp-69. Asp-100 serves as a coordination point for Zn(2+). The active-site Proton acceptor is the Glu-134. 3 residues coordinate Zn(2+): Glu-135, Glu-163, and His-349.

This sequence belongs to the peptidase M20A family. DapE subfamily. In terms of assembly, homodimer. It depends on Zn(2+) as a cofactor. Requires Co(2+) as cofactor.

The enzyme catalyses N-succinyl-(2S,6S)-2,6-diaminopimelate + H2O = (2S,6S)-2,6-diaminopimelate + succinate. The protein operates within amino-acid biosynthesis; L-lysine biosynthesis via DAP pathway; LL-2,6-diaminopimelate from (S)-tetrahydrodipicolinate (succinylase route): step 3/3. Its function is as follows. Catalyzes the hydrolysis of N-succinyl-L,L-diaminopimelic acid (SDAP), forming succinate and LL-2,6-diaminopimelate (DAP), an intermediate involved in the bacterial biosynthesis of lysine and meso-diaminopimelic acid, an essential component of bacterial cell walls. In Xanthomonas campestris pv. campestris (strain 8004), this protein is Succinyl-diaminopimelate desuccinylase.